A 292-amino-acid polypeptide reads, in one-letter code: Peroxisomal 2,4-dienoyl-CoA reductase [(3E)-enoyl-CoA-producing] (292 aa).

Alanine 2 carries the N-acetylalanine modification. Residues 35-40, 60-64, and aspartate 86 contribute to the NADP(+) site; these read GGGSGI and RSLQK. Arginine 60 contacts substrate. An N6-acetyllysine modification is found at lysine 64. Substrate contacts are provided by residues arginine 88, phenylalanine 118, and 126–128; that span reads SFN. N6-acetyllysine is present on lysine 151. Residues lysine 182 and 208-214 contribute to the NADP(+) site; that span reads PGAISGT. Residue arginine 219 participates in substrate binding. Phosphoserine is present on serine 287. Residues 290-292 carry the Microbody targeting signal motif; it reads AKL. Lysine 291 is modified (N6-acetyllysine).

It belongs to the short-chain dehydrogenases/reductases (SDR) family. 2,4-dienoyl-CoA reductase subfamily. Monomer, dimer and oligomer.

Its subcellular location is the peroxisome. The catalysed reaction is a (2E,4Z)-dienoyl-CoA + NADPH + H(+) = a 4,5-saturated-(3E)-enoyl-CoA + NADP(+). It catalyses the reaction a (2E,4E)-dienoyl-CoA + NADPH + H(+) = a 4,5-saturated-(3E)-enoyl-CoA + NADP(+). It carries out the reaction (2E,4E)-hexadienoyl-CoA + NADPH + H(+) = (3E)-hexenoyl-CoA + NADP(+). The enzyme catalyses (2E,4E)-decadienoyl-CoA + NADPH + H(+) = (3E)-decenoyl-CoA + NADP(+). The catalysed reaction is (2E,4Z,7Z,10Z,13Z,16Z,19Z)-docosaheptaenoyl-CoA + NADPH + H(+) = (3E,7Z,10Z,13Z,16Z,19Z)-docosahexaenoyl-CoA + NADP(+). Auxiliary enzyme of beta-oxidation. Participates in the degradation of unsaturated fatty enoyl-CoA esters having double bonds in both even- and odd-numbered positions in peroxisome. Catalyzes the NADP-dependent reduction of 2,4-dienoyl-CoA to yield trans-3-enoyl-CoA. Has activity towards short and medium chain 2,4-dienoyl-CoAs, but also towards 2,4,7,10,13,16,19-docosaheptaenoyl-CoA, suggesting that it does not constitute a rate limiting step in the peroxisomal degradation of docosahexaenoic acid. The polypeptide is Peroxisomal 2,4-dienoyl-CoA reductase [(3E)-enoyl-CoA-producing] (Decr2) (Mus musculus (Mouse)).